Reading from the N-terminus, the 344-residue chain is Dihydroorotase (344 aa).

2 residues coordinate Zn(2+): H14 and H16. Residues 16–18 (HLR) and N42 each bind substrate. K100, H137, and H175 together coordinate Zn(2+). K100 bears the N6-carboxylysine mark. H137 contacts substrate. L220 serves as a coordination point for substrate. Zn(2+) is bound at residue D248. The active site involves D248. Residues H252 and A264 each contribute to the substrate site.

Belongs to the metallo-dependent hydrolases superfamily. DHOase family. Class II DHOase subfamily. Homodimer. It depends on Zn(2+) as a cofactor.

The catalysed reaction is (S)-dihydroorotate + H2O = N-carbamoyl-L-aspartate + H(+). It participates in pyrimidine metabolism; UMP biosynthesis via de novo pathway; (S)-dihydroorotate from bicarbonate: step 3/3. Its function is as follows. Catalyzes the reversible cyclization of carbamoyl aspartate to dihydroorotate. The polypeptide is Dihydroorotase (Roseobacter denitrificans (strain ATCC 33942 / OCh 114) (Erythrobacter sp. (strain OCh 114))).